Here is an 84-residue protein sequence, read N- to C-terminus: Toxin CsE9 (84 aa).

The first 19 residues, 1 to 19 (MNSLLMITTCLILIGTVLA), serve as a signal peptide directing secretion. The LCN-type CS-alpha/beta domain maps to 20–83 (EDGYLFDKRK…ISRTPGKTCK (64 aa)). Intrachain disulfides connect Cys-31/Cys-82, Cys-35/Cys-58, Cys-44/Cys-63, and Cys-48/Cys-65.

Belongs to the long (4 C-C) scorpion toxin superfamily. Sodium channel inhibitor family. Beta subfamily. Expressed by the venom gland.

It localises to the secreted. Functionally, beta toxins bind voltage-independently at site-4 of sodium channels (Nav) and shift the voltage of activation toward more negative potentials thereby affecting sodium channel activation and promoting spontaneous and repetitive firing. This chain is Toxin CsE9, found in Centruroides sculpturatus (Arizona bark scorpion).